The chain runs to 124 residues: Small ribosomal subunit protein uS12 (124 aa).

Position 89 is a 3-methylthioaspartic acid (aspartate 89).

The protein belongs to the universal ribosomal protein uS12 family. As to quaternary structure, part of the 30S ribosomal subunit. Contacts proteins S8 and S17. May interact with IF1 in the 30S initiation complex.

Functionally, with S4 and S5 plays an important role in translational accuracy. In terms of biological role, interacts with and stabilizes bases of the 16S rRNA that are involved in tRNA selection in the A site and with the mRNA backbone. Located at the interface of the 30S and 50S subunits, it traverses the body of the 30S subunit contacting proteins on the other side and probably holding the rRNA structure together. The combined cluster of proteins S8, S12 and S17 appears to hold together the shoulder and platform of the 30S subunit. The chain is Small ribosomal subunit protein uS12 from Vibrio cholerae serotype O1 (strain ATCC 39315 / El Tor Inaba N16961).